Here is a 200-residue protein sequence, read N- to C-terminus: Chromophore lyase CpcT/CpeT 2 (200 aa).

The protein belongs to the CpcT/CpeT biliprotein lyase family.

Functionally, covalently attaches a chromophore to Cys residue(s) of phycobiliproteins. The protein is Chromophore lyase CpcT/CpeT 2 of Microcystis aeruginosa (strain NIES-843 / IAM M-2473).